Reading from the N-terminus, the 437-residue chain is GTPase Der (437 aa).

EngA-type G domains lie at 4 to 167 and 175 to 352; these read PIVA…PDNA and IHFS…QHHR. GTP contacts are provided by residues 10–17, 57–61, 119–122, 181–188, 229–233, and 294–297; these read GRPNVGKS, DTGGI, NKVD, DTAGI, and NKWD. The KH-like domain maps to 353–437; the sequence is QRIQSAVLND…PIHLIKRQRQ (85 aa).

The protein belongs to the TRAFAC class TrmE-Era-EngA-EngB-Septin-like GTPase superfamily. EngA (Der) GTPase family. In terms of assembly, associates with the 50S ribosomal subunit.

Its function is as follows. GTPase that plays an essential role in the late steps of ribosome biogenesis. The chain is GTPase Der from Limosilactobacillus reuteri (strain DSM 20016) (Lactobacillus reuteri).